The chain runs to 184 residues: uncharacterized protein (184 aa).

Positions 146–177 (HPKTSLAQQPNAKATQPPLSKETLNTAKETDP) are disordered. Residues 150 to 172 (SLAQQPNAKATQPPLSKETLNTA) are compositionally biased toward polar residues.

This is an uncharacterized protein from Picosynechococcus sp. (strain ATCC 27264 / PCC 7002 / PR-6) (Agmenellum quadruplicatum).